A 380-amino-acid chain; its full sequence is Probable protein phosphatase 2C 27 (380 aa).

Residues 84 to 344 (RSGSCAEQGA…DNLTVIVVCF (261 aa)) enclose the PPM-type phosphatase domain. The Mn(2+) site is built by Asp-128, Gly-129, Asp-292, and Asp-335.

This sequence belongs to the PP2C family. It depends on Mg(2+) as a cofactor. Requires Mn(2+) as cofactor. In terms of tissue distribution, expressed in roots, leaves, stems, flower, and trichomes.

It localises to the nucleus. Its subcellular location is the cytoplasm. The catalysed reaction is O-phospho-L-seryl-[protein] + H2O = L-seryl-[protein] + phosphate. The enzyme catalyses O-phospho-L-threonyl-[protein] + H2O = L-threonyl-[protein] + phosphate. Functionally, confers salt tolerance by triggering the expression of stress-responsive genes. This Arabidopsis thaliana (Mouse-ear cress) protein is Probable protein phosphatase 2C 27.